We begin with the raw amino-acid sequence, 167 residues long: Arginine repressor (167 aa).

It belongs to the ArgR family.

The protein resides in the cytoplasm. Its pathway is amino-acid biosynthesis; L-arginine biosynthesis [regulation]. Its function is as follows. Regulates arginine biosynthesis genes. This chain is Arginine repressor, found in Mycobacterium leprae (strain Br4923).